A 348-amino-acid polypeptide reads, in one-letter code: Peptide-N(4)-(N-acetyl-beta-glucosaminyl)asparagine amidase (348 aa).

Zn(2+) contacts are provided by Cys-116, Cys-119, Cys-151, and Cys-154. Cys-177 functions as the Nucleophile in the catalytic mechanism. Residues His-204 and Asp-221 contribute to the active site. Glu-224 lines the substrate pocket. The tract at residues 311–348 is disordered; that stretch reads PSATPTKEMQKLKISKTGNKGRISGSAEWKESRGENGK. Residues 338–348 are compositionally biased toward basic and acidic residues; that stretch reads EWKESRGENGK.

It belongs to the transglutaminase-like superfamily. PNGase family. Zn(2+) serves as cofactor.

It localises to the cytoplasm. The catalysed reaction is Hydrolysis of an N(4)-(acetyl-beta-D-glucosaminyl)asparagine residue in which the glucosamine residue may be further glycosylated, to yield a (substituted) N-acetyl-beta-D-glucosaminylamine and a peptide containing an aspartate residue.. In terms of biological role, specifically deglycosylates the denatured form of N-linked glycoproteins in the cytoplasm and assists their proteasome-mediated degradation. Cleaves the beta-aspartyl-glucosamine (GlcNAc) of the glycan and the amide side chain of Asn, converting Asn to Asp. Prefers proteins containing high-mannose over those bearing complex type oligosaccharides. Can recognize misfolded proteins in the endoplasmic reticulum that are exported to the cytosol to be destroyed and deglycosylate them, while it has no activity toward native proteins. Deglycosylation is a prerequisite for subsequent proteasome-mediated degradation of some, but not all, misfolded glycoproteins. In Candida glabrata (strain ATCC 2001 / BCRC 20586 / JCM 3761 / NBRC 0622 / NRRL Y-65 / CBS 138) (Yeast), this protein is Peptide-N(4)-(N-acetyl-beta-glucosaminyl)asparagine amidase (PNG1).